Reading from the N-terminus, the 282-residue chain is Putative hydrolase Bmul_3283/BMULJ_05242 (282 aa).

Mg(2+)-binding residues include glutamate 124, glutamate 126, and aspartate 155.

This sequence belongs to the FAH family. Mg(2+) is required as a cofactor.

The protein is Putative hydrolase Bmul_3283/BMULJ_05242 of Burkholderia multivorans (strain ATCC 17616 / 249).